The following is a 337-amino-acid chain: D-alanine--D-alanine ligase (337 aa).

The ATP-grasp domain occupies lysine 124 to asparagine 330. Alanine 154–glutamate 209 contacts ATP. Residues aspartate 284, glutamate 297, and asparagine 299 each coordinate Mg(2+).

It belongs to the D-alanine--D-alanine ligase family. Mg(2+) serves as cofactor. It depends on Mn(2+) as a cofactor.

The protein resides in the cytoplasm. It carries out the reaction 2 D-alanine + ATP = D-alanyl-D-alanine + ADP + phosphate + H(+). The protein operates within cell wall biogenesis; peptidoglycan biosynthesis. In terms of biological role, cell wall formation. The polypeptide is D-alanine--D-alanine ligase (Shewanella sp. (strain W3-18-1)).